Reading from the N-terminus, the 358-residue chain is Probable D-xylulose reductase A (358 aa).

Residues cysteine 47, histidine 72, and glutamate 73 each contribute to the Zn(2+) site. Residue 182-187 participates in NAD(+) binding; it reads GAGPVG.

The protein belongs to the zinc-containing alcohol dehydrogenase family. Zn(2+) serves as cofactor.

The enzyme catalyses xylitol + NAD(+) = D-xylulose + NADH + H(+). Its pathway is carbohydrate degradation; L-arabinose degradation via L-arabinitol; D-xylulose 5-phosphate from L-arabinose (fungal route): step 4/5. Functionally, xylitol dehydrogenase which catalyzes the conversion of xylitol to D-xylulose. Xylose is a major component of hemicelluloses such as xylan. Most fungi utilize D-xylose via three enzymatic reactions, xylose reductase (XR), xylitol dehydrogenase (XDH), and xylulokinase, to form xylulose 5-phosphate, which enters pentose phosphate pathway. The protein is Probable D-xylulose reductase A (xdhA) of Aspergillus fumigatus (strain CBS 144.89 / FGSC A1163 / CEA10) (Neosartorya fumigata).